The following is a 461-amino-acid chain: Diaboline synthase (461 aa).

Residues histidine 185 and aspartate 400 each act as proton acceptor in the active site.

Belongs to the plant acyltransferase family. As to quaternary structure, monomer.

The protein localises to the cytoplasm. The enzyme catalyses 17,18-epoxy-17-hydroxycur-19-ene + acetyl-CoA = diaboline + CoA. It participates in alkaloid biosynthesis. Its function is as follows. Acetyltransferase involved in the biosynthesis of curare monoterpene indole alkaloids (MIAs), natural products such as diaboline, a pharmacologically active compound used to regulate blood pressure. Curare alkaloids act as animal glycine receptor antagonists. Catalyzes the conversion of 17,18-epoxy-17-hydroxycur-19-ene (Wieland-Gumlich aldehyde) to diaboline. This chain is Diaboline synthase, found in Strychnos sp.